The sequence spans 209 residues: Large ribosomal subunit protein uL4 (209 aa).

The tract at residues glycine 46–arginine 71 is disordered. Residues serine 59 to arginine 71 are compositionally biased toward basic residues.

This sequence belongs to the universal ribosomal protein uL4 family. In terms of assembly, part of the 50S ribosomal subunit.

Its function is as follows. One of the primary rRNA binding proteins, this protein initially binds near the 5'-end of the 23S rRNA. It is important during the early stages of 50S assembly. It makes multiple contacts with different domains of the 23S rRNA in the assembled 50S subunit and ribosome. Functionally, forms part of the polypeptide exit tunnel. The sequence is that of Large ribosomal subunit protein uL4 from Borrelia garinii subsp. bavariensis (strain ATCC BAA-2496 / DSM 23469 / PBi) (Borreliella bavariensis).